Here is a 900-residue protein sequence, read N- to C-terminus: Endoglucanase H (900 aa).

A signal peptide spans 1 to 44; the sequence is MKKRLLVSFLVLSIIVGLLSFQSLGNYNSGLKIGAWVGTQPSES. The GH26 domain occupies 45-298; it reads AIKSFQELQG…NSSPEALAAY (254 aa). The active-site Proton donor is the Glu-131. The active-site Nucleophile is Glu-244. Residues 300 to 630 form a catalytic region; sequence EAIGAGSSNP…DTEILNALFN (331 aa). The disordered stretch occupies residues 303–326; sequence GAGSSNPTPTPTWTSTPPSSSPKA. The span at 306–324 shows a compositional bias: low complexity; that stretch reads SSNPTPTPTWTSTPPSSSP. Glu-460 serves as the catalytic Proton donor. Catalysis depends on Glu-565, which acts as the Nucleophile. Positions 655 to 900 constitute a CBM11 domain; it reads AVGEKMLDDF…LLKAISEIPI (246 aa). The Dockerin domain maps to 827 to 900; sequence PSIKHGDLNF…LLKAISEIPI (74 aa).

It in the N-terminal section; belongs to the glycosyl hydrolase 5 (cellulase A) family. This sequence in the C-terminal section; belongs to the glycosyl hydrolase 26 family.

The enzyme catalyses Endohydrolysis of (1-&gt;4)-beta-D-glucosidic linkages in cellulose, lichenin and cereal beta-D-glucans.. In terms of biological role, this enzyme catalyzes the endohydrolysis of 1,4-beta-glucosidic linkages in cellulose, lichenin and cereal beta-D-glucans. The sequence is that of Endoglucanase H (celH) from Acetivibrio thermocellus (strain ATCC 27405 / DSM 1237 / JCM 9322 / NBRC 103400 / NCIMB 10682 / NRRL B-4536 / VPI 7372) (Clostridium thermocellum).